We begin with the raw amino-acid sequence, 856 residues long: MISPDKQYETDTNLYNPSEIEKKWQSIWTENNLYKTDELTENSDKFYALSMFPYPSGNLHMGHVRNYVITDLIARFQRFKGKSVLHPMGWDAFGLPAENAAIERGISPSVWTKKNISHMKSQLKLLGLSVDWDREFATCDENYYIWTQYLFLELYKAGLVYQKESEVNWDPIDNTVLANEQVDSEGKSWRSGALVEKKLLKQWFLRITNYADELLKDLEKLDNWPERVKIMQDNWIGKSIGTNINFNINTNPEKKITVFTTRPDTLFGVTYLAISINHSLIKNISDQETIQDIENLKQYLKNNKNNELEKIGIKTSLIAINPVNSEPIPIWVASYVLDEYGTGAVMGVPAHDLRDFEFAKKNNIDIKHVIIKDKSEKTKELDEAYVENGYLINSNHFNGIANTIAKLKISEEGVNNGWAENKIQYRLRDWLISRQRYWGCPIPIVNCKKCGSVPLNQSELPVALPKDIDISANKINALGDNYNWINTTCPKCGIAAKKETDTMDTFMCSSWYFLRYPSSRCSTKPFEKIEINNWLPVDQYVGGVEHAILHLLYARFFTKALRDNELFEIDEPFKKLLTQGMVQSAAYKNNKTGKYISPSDINDLSNPTDPIDNSKLEVLFEKMSKSKYNGIDPESVIKKYGADTARMFILFKAPPEKDLEWGDSDVEGQFRFLSRIWKLYISCSKDINSKSKSYPNKEKTLIKSMNIAIKEITNDISNNQFNTAISELMKFYNSLSNNINDVNNNLKIDALKTFCILLAPFAPHISEEIWLLIGFKNSVHLEHWPSFNAEALKEDSYVLVIQVNGKVRDKININNEMNEDQIKELTLKRPNILKWTQDKEIRKIIIVKGKIMNIVV.

The 'HIGH' region signature appears at 53 to 63 (PYPSGNLHMGH). Positions 622–626 (KMSKS) match the 'KMSKS' region motif. K625 contributes to the ATP binding site.

The protein belongs to the class-I aminoacyl-tRNA synthetase family.

Its subcellular location is the cytoplasm. The catalysed reaction is tRNA(Leu) + L-leucine + ATP = L-leucyl-tRNA(Leu) + AMP + diphosphate. The sequence is that of Leucine--tRNA ligase from Prochlorococcus marinus (strain MIT 9312).